Consider the following 334-residue polypeptide: tRNA uridine(34) hydroxylase (334 aa).

The Rhodanese domain occupies 123-217 (SDPDVILVDT…YLEEVKQEES (95 aa)). The Cysteine persulfide intermediate role is filled by C177.

This sequence belongs to the TrhO family.

The enzyme catalyses uridine(34) in tRNA + AH2 + O2 = 5-hydroxyuridine(34) in tRNA + A + H2O. Catalyzes oxygen-dependent 5-hydroxyuridine (ho5U) modification at position 34 in tRNAs. This is tRNA uridine(34) hydroxylase from Shewanella putrefaciens (strain CN-32 / ATCC BAA-453).